Reading from the N-terminus, the 323-residue chain is Pyruvate dehydrogenase E1 component subunit beta (323 aa).

Residue Glu60 coordinates thiamine diphosphate. K(+) is bound by residues Ile113, Ala161, Ile162, Asp164, and Asn166.

As to quaternary structure, heterodimer of an alpha and a beta chain. It depends on thiamine diphosphate as a cofactor.

It localises to the plastid. The protein localises to the chloroplast. The enzyme catalyses N(6)-[(R)-lipoyl]-L-lysyl-[protein] + pyruvate + H(+) = N(6)-[(R)-S(8)-acetyldihydrolipoyl]-L-lysyl-[protein] + CO2. Its function is as follows. The pyruvate dehydrogenase complex catalyzes the overall conversion of pyruvate to acetyl-CoA and CO(2). It contains multiple copies of three enzymatic components: pyruvate dehydrogenase (E1), dihydrolipoamide acetyltransferase (E2) and lipoamide dehydrogenase (E3). The polypeptide is Pyruvate dehydrogenase E1 component subunit beta (pdhB) (Gracilaria tenuistipitata var. liui (Red alga)).